The primary structure comprises 502 residues: Aspartyl/glutamyl-tRNA(Asn/Gln) amidotransferase subunit B (502 aa).

Belongs to the GatB/GatE family. GatB subfamily. In terms of assembly, heterotrimer of A, B and C subunits.

It catalyses the reaction L-glutamyl-tRNA(Gln) + L-glutamine + ATP + H2O = L-glutaminyl-tRNA(Gln) + L-glutamate + ADP + phosphate + H(+). The enzyme catalyses L-aspartyl-tRNA(Asn) + L-glutamine + ATP + H2O = L-asparaginyl-tRNA(Asn) + L-glutamate + ADP + phosphate + 2 H(+). Allows the formation of correctly charged Asn-tRNA(Asn) or Gln-tRNA(Gln) through the transamidation of misacylated Asp-tRNA(Asn) or Glu-tRNA(Gln) in organisms which lack either or both of asparaginyl-tRNA or glutaminyl-tRNA synthetases. The reaction takes place in the presence of glutamine and ATP through an activated phospho-Asp-tRNA(Asn) or phospho-Glu-tRNA(Gln). The sequence is that of Aspartyl/glutamyl-tRNA(Asn/Gln) amidotransferase subunit B from Brucella suis (strain ATCC 23445 / NCTC 10510).